The chain runs to 342 residues: Holliday junction branch migration complex subunit RuvB (342 aa).

Residues 1–181 (MEERFLTPKD…FGMVLELEFY (181 aa)) form a large ATPase domain (RuvB-L) region. ATP contacts are provided by residues leucine 20, arginine 21, glycine 62, lysine 65, threonine 66, threonine 67, 128-130 (EDF), arginine 171, tyrosine 181, and arginine 218. Threonine 66 is a binding site for Mg(2+). Residues 182 to 252 (TPDELKQIIK…TVEDAMKIMG (71 aa)) form a small ATPAse domain (RuvB-S) region. Residues 255-342 (AEGLDDMDRK…IGPLWDSTGD (88 aa)) form a head domain (RuvB-H) region. Positions 310 and 315 each coordinate DNA.

It belongs to the RuvB family. Homohexamer. Forms an RuvA(8)-RuvB(12)-Holliday junction (HJ) complex. HJ DNA is sandwiched between 2 RuvA tetramers; dsDNA enters through RuvA and exits via RuvB. An RuvB hexamer assembles on each DNA strand where it exits the tetramer. Each RuvB hexamer is contacted by two RuvA subunits (via domain III) on 2 adjacent RuvB subunits; this complex drives branch migration. In the full resolvosome a probable DNA-RuvA(4)-RuvB(12)-RuvC(2) complex forms which resolves the HJ.

The protein resides in the cytoplasm. It catalyses the reaction ATP + H2O = ADP + phosphate + H(+). The RuvA-RuvB-RuvC complex processes Holliday junction (HJ) DNA during genetic recombination and DNA repair, while the RuvA-RuvB complex plays an important role in the rescue of blocked DNA replication forks via replication fork reversal (RFR). RuvA specifically binds to HJ cruciform DNA, conferring on it an open structure. The RuvB hexamer acts as an ATP-dependent pump, pulling dsDNA into and through the RuvAB complex. RuvB forms 2 homohexamers on either side of HJ DNA bound by 1 or 2 RuvA tetramers; 4 subunits per hexamer contact DNA at a time. Coordinated motions by a converter formed by DNA-disengaged RuvB subunits stimulates ATP hydrolysis and nucleotide exchange. Immobilization of the converter enables RuvB to convert the ATP-contained energy into a lever motion, pulling 2 nucleotides of DNA out of the RuvA tetramer per ATP hydrolyzed, thus driving DNA branch migration. The RuvB motors rotate together with the DNA substrate, which together with the progressing nucleotide cycle form the mechanistic basis for DNA recombination by continuous HJ branch migration. Branch migration allows RuvC to scan DNA until it finds its consensus sequence, where it cleaves and resolves cruciform DNA. This chain is Holliday junction branch migration complex subunit RuvB, found in Kosmotoga olearia (strain ATCC BAA-1733 / DSM 21960 / TBF 19.5.1).